A 107-amino-acid polypeptide reads, in one-letter code: Nucleoid-associated protein PHZ_c0369 (107 aa).

The protein belongs to the YbaB/EbfC family. Homodimer.

The protein resides in the cytoplasm. It localises to the nucleoid. Its function is as follows. Binds to DNA and alters its conformation. May be involved in regulation of gene expression, nucleoid organization and DNA protection. This Phenylobacterium zucineum (strain HLK1) protein is Nucleoid-associated protein PHZ_c0369.